Consider the following 284-residue polypeptide: Probable endonuclease 4 (284 aa).

Residues H69, H109, E145, D179, H182, H216, D229, H231, and E261 each coordinate Zn(2+).

The protein belongs to the AP endonuclease 2 family. Zn(2+) serves as cofactor.

The enzyme catalyses Endonucleolytic cleavage to 5'-phosphooligonucleotide end-products.. Endonuclease IV plays a role in DNA repair. It cleaves phosphodiester bonds at apurinic or apyrimidinic (AP) sites, generating a 3'-hydroxyl group and a 5'-terminal sugar phosphate. This is Probable endonuclease 4 from Chlorobium phaeobacteroides (strain BS1).